A 531-amino-acid chain; its full sequence is High-affinity glucose transporter ght2 (531 aa).

Residues 5 to 13 (RGKNFTLVM) lie on the Cytoplasmic side of the membrane. Residues 14 to 34 (LIFVSMAGWMFGADTGSIGGV) form a helical membrane-spanning segment. The Extracellular portion of the chain corresponds to 35–62 (TSMRDFRERYADRYDPITDQYSLSSARQ). The chain crosses the membrane as a helical span at residues 63-83 (GLLTGMVNVGSLFGCIISSPI). Residues 84 to 91 (ADRFGKRL) lie on the Cytoplasmic side of the membrane. A helical membrane pass occupies residues 92-112 (SIIGFCAVYIIGIIVQVTAVP). Over 113-116 (SWVQ) the chain is Extracellular. A helical membrane pass occupies residues 117 to 137 (IMVAKIWTGIGIGALSVLAPG). Residues 138–148 (YQSETAPPSIR) lie on the Cytoplasmic side of the membrane. Residues 149–169 (GTVVVTYQLFVTGGIFIAACI) form a helical membrane-spanning segment. The Extracellular portion of the chain corresponds to 170-183 (NMGTHKLHKTAQWR). A helical transmembrane segment spans residues 184–204 (VSIGINLLWGIITMIGILFLP). Topologically, residues 205–270 (ESPRYLIQVG…IFGKDIRYRT (66 aa)) are cytoplasmic. Residues 271 to 289 (FLGMFVMSLQQLTGNNYFF) traverse the membrane as a helical segment. The Extracellular segment spans residues 290–305 (YYGFSVMQGAGINSPY). Residues 306 to 326 (LSAMILDAVNFGCTFGGMYVL) form a helical membrane-spanning segment. Residues 327-332 (ERFGRR) are Cytoplasmic-facing. A helical transmembrane segment spans residues 333–353 (NPLIIGGIWQSICFFIYSAVG). Residues 354 to 367 (SRALYHKNGTSNTR) are Extracellular-facing. N361 is a glycosylation site (N-linked (GlcNAc...) asparagine). Residues 368–388 (AGAVMIVMACLFIFGFAQTWA) form a helical membrane-spanning segment. Residues 389–408 (PAAYVIVGESYPVRYRSKCA) are Cytoplasmic-facing. Residues 409 to 429 (AVATASNWLWNFLISFFTPFI) traverse the membrane as a helical segment. The Extracellular segment spans residues 430-436 (QASIGFK). The chain crosses the membrane as a helical span at residues 437–457 (YGYVFASCNLTGAIVIFLFAK). At 458-531 (ETKGLTLEEI…QYSSHEEDYA (74 aa)) the chain is on the cytoplasmic side. Residues 491–531 (KKVEKEKSRKGGARGESVEYVERASNTDSSPQYSSHEEDYA) form a disordered region. Residues S507, S515, S519, and S520 each carry the phosphoserine modification. Over residues 514-524 (ASNTDSSPQYS) the composition is skewed to polar residues. Y523 bears the Phosphotyrosine mark.

Belongs to the major facilitator superfamily. Sugar transporter (TC 2.A.1.1) family.

It localises to the membrane. High-affinity glucose transporter. This is High-affinity glucose transporter ght2 (ght2) from Schizosaccharomyces pombe (strain 972 / ATCC 24843) (Fission yeast).